We begin with the raw amino-acid sequence, 735 residues long: Protostadienol synthase helA (735 aa).

The PFTB 1 repeat unit spans residues 132 to 173 (KQEMCRYLLNVVNEDGGWGLFIQSPSTVFGTVMNYCMLRILG). The active-site Proton donor is D463. PFTB repeat units lie at residues 490 to 531 (LQQA…YENV), 567 to 607 (LSRS…ACMG), and 616 to 663 (CQRA…AVIG).

It belongs to the terpene cyclase/mutase family.

It catalyses the reaction (S)-2,3-epoxysqualene = (17Z)-protosta-17(20),24-dien-3beta-ol. It participates in mycotoxin biosynthesis. Protostadienol synthase; part of the gene cluster that mediates the biosynthesis of helvolic acid, an antibacterial nortriterpenoid. Protostadienol synthase helA cyclizes (3S)-oxidosqualene to (17Z)-protosta-17(20),24-dien-3-beta-ol (protostadienol). The synthesis of protostadienol is followed by several steps of monooxygenation, dehydrogenation, and acyl transfer to yield the final helvolic acid. Following the cyclization to the tetracyclic protostadienol by helA, cytochrome P450 monooxygenases helB1-mediated and helB2-mediated oxidation at C-4 and C-16, acyltransferase helD2-dependent acetylation of 16-OH, oxidation of C-21 by cytochrome P450 monooxygenase helB4, and short chain dehydrogenase helC-dependent oxidative decarboxylation yield the fusidane skeleton. This intermediate is further modified in three additional steps mediated by the cytochrome P450 monooxygenase helB3, the acyltransferase helD1, and the 3-ketosteroid 1-dehydrogenase helE to give helvolic acid. Compared with the late stages in the biosynthesis of helvolic acid, enzymes involved in the early stage modifications act in a relatively strict order. The hydroxylation of C-16 by helB1 and subsequent acetylation by helD2 should occur before the helB3-mediated oxidation of C-21. C-4 demethylation in fusidane-type antibiotics proceeds in an unusual manner though it is also achieved by oxidative decarboxylation. The methyl group at C-4 beta position is oxidized by helB1 and subsequently removed by the short chain dehydrogenase helC. The sequence is that of Protostadienol synthase helA from Aspergillus fumigatus (strain ATCC MYA-4609 / CBS 101355 / FGSC A1100 / Af293) (Neosartorya fumigata).